The chain runs to 86 residues: Elicitor peptide 5 (86 aa).

The propeptide occupies 1-59; that stretch reads MQQERDHKRDCCKLMPQTVKAFFKCLRFRRSSSSSSDMVKARARNEEKEEPSSIETSTR. A disordered region spans residues 31–86; sequence SSSSSSDMVKARARNEEKEEPSSIETSTRSLNVMRKGIRKQPVSSGKRGGVNDYDM. Basic and acidic residues predominate over residues 39 to 51; it reads VKARARNEEKEEP.

The protein belongs to the brassicaceae elicitor peptide family.

Elicitor of plant defense. In Arabidopsis thaliana (Mouse-ear cress), this protein is Elicitor peptide 5 (PEP5).